Here is a 111-residue protein sequence, read N- to C-terminus: STFABAPPGBPAKGAKIFKAKCAZCHTVBAGAGHKQGPNLNGAFGRTSGTAAGFSYSAABKBKTADWBZBTLYDYLLNPKKYIPGTKMVFAGLKKPZBRADLIAFLKDATA.

Ser1 carries the post-translational modification N-acetylserine. Heme c contacts are provided by Cys22, Cys25, and His26. Residue Lys80 is modified to N6,N6,N6-trimethyllysine. Met88 provides a ligand contact to heme c.

Belongs to the cytochrome c family. Binds 1 heme c group covalently per subunit.

Its subcellular location is the mitochondrion intermembrane space. Functionally, electron carrier protein. The oxidized form of the cytochrome c heme group can accept an electron from the heme group of the cytochrome c1 subunit of cytochrome reductase. Cytochrome c then transfers this electron to the cytochrome oxidase complex, the final protein carrier in the mitochondrial electron-transport chain. The chain is Cytochrome c from Ulva intestinalis (Hollow green nori).